Here is a 135-residue protein sequence, read N- to C-terminus: uncharacterized protein (135 aa).

Residues 4-24 (LGVFLILASIVCGVVAICGCT) traverse the membrane as a helical segment.

Its subcellular location is the membrane. This is an uncharacterized protein from Methanocaldococcus jannaschii (strain ATCC 43067 / DSM 2661 / JAL-1 / JCM 10045 / NBRC 100440) (Methanococcus jannaschii).